The chain runs to 296 residues: MFKSGFITIVGRPNVGKSTLTNLLMGEKLSIVSNKPQTTRNNIQTILTGEDYQMIFVDTPGIHKPKHKLGEYMVNSATDSIKDVDLVLFLSNPCEEVGRGDKFIIEQLKNQKAPVIFVLNKVDESSPEKVAKTLELFSKEYDFAEMIPISAMKAKNTDKLLELMVKYLPEGPKYYPDDMITDVQERFVVAEIVREKALKNLSQEVPHGIAVDVIQMKQDDNGKYNIEVDLICEKASHKGIIIGKNGQTLKKIGSTARYELERFLRAKVNIKIWVKVRKEWRDNTSLLKELGYKKLK.

Residues 3–170 enclose the Era-type G domain; that stretch reads KSGFITIVGR…LELMVKYLPE (168 aa). A G1 region spans residues 11-18; it reads GRPNVGKS. A GTP-binding site is contributed by 11–18; that stretch reads GRPNVGKS. Residues 37-41 are G2; it reads QTTRN. Positions 58 to 61 are G3; sequence DTPG. GTP contacts are provided by residues 58–62 and 120–123; these read DTPGI and NKVD. The tract at residues 120 to 123 is G4; it reads NKVD. The segment at 149–151 is G5; sequence ISA. Residues 201–278 enclose the KH type-2 domain; that stretch reads LSQEVPHGIA…NIKIWVKVRK (78 aa).

This sequence belongs to the TRAFAC class TrmE-Era-EngA-EngB-Septin-like GTPase superfamily. Era GTPase family. In terms of assembly, monomer.

Its subcellular location is the cytoplasm. It is found in the cell membrane. Functionally, an essential GTPase that binds both GDP and GTP, with rapid nucleotide exchange. Plays a role in 16S rRNA processing and 30S ribosomal subunit biogenesis and possibly also in cell cycle regulation and energy metabolism. The protein is GTPase Era of Clostridium perfringens (strain ATCC 13124 / DSM 756 / JCM 1290 / NCIMB 6125 / NCTC 8237 / Type A).